Here is a 92-residue protein sequence, read N- to C-terminus: uncharacterized protein (92 aa).

Transmembrane regions (helical) follow at residues 34-54 (GLGI…FMFG) and 65-85 (LLYI…ASTV).

It localises to the cell membrane. This is an uncharacterized protein from Bacillus anthracis.